The chain runs to 362 residues: Chorismate synthase (362 aa).

Arginine 46 contacts NADP(+). FMN is bound by residues arginine 122–serine 124, asparagine 238–alanine 239, glycine 278, lysine 293–serine 297, and arginine 319.

This sequence belongs to the chorismate synthase family. In terms of assembly, homotetramer. It depends on FMNH2 as a cofactor.

The enzyme catalyses 5-O-(1-carboxyvinyl)-3-phosphoshikimate = chorismate + phosphate. Its pathway is metabolic intermediate biosynthesis; chorismate biosynthesis; chorismate from D-erythrose 4-phosphate and phosphoenolpyruvate: step 7/7. Catalyzes the anti-1,4-elimination of the C-3 phosphate and the C-6 proR hydrogen from 5-enolpyruvylshikimate-3-phosphate (EPSP) to yield chorismate, which is the branch point compound that serves as the starting substrate for the three terminal pathways of aromatic amino acid biosynthesis. This reaction introduces a second double bond into the aromatic ring system. This Campylobacter jejuni subsp. jejuni serotype O:6 (strain 81116 / NCTC 11828) protein is Chorismate synthase.